The sequence spans 746 residues: Bud site selection protein 7 (746 aa).

Positions 733-746 are CHS5-binding; sequence LNFFTTCTIGCYDA.

The protein belongs to the CHAPS family. Component of the CHS5/6 complex composed of the 4 CHAPS proteins BCH1, BCH2v, BUD7, and CHS6 as well as at least CHS5 and GTP-bound ARF1. The complex interacts with the cargo protein CHS3.

The protein localises to the golgi apparatus. Its subcellular location is the trans-Golgi network membrane. Its function is as follows. Member of the CHS5-ARF1P-binding proteins (CHAPS) which mediates export of specific cargo proteins, including chitin synthase CHS3. May be involved in positioning the proximal bud pole signal. The chain is Bud site selection protein 7 (BUD7) from Saccharomyces cerevisiae (strain ATCC 204508 / S288c) (Baker's yeast).